The sequence spans 783 residues: uncharacterized protein (783 aa).

A disordered region spans residues 1–22 (MVNTRGYTTLPNVEEPANNSQD). The Cytoplasmic portion of the chain corresponds to 1-109 (MVNTRGYTTL…SKIGNVMVMR (109 aa)). Residues 110 to 127 (RIFYIMMMSIIAALIIAS) form a helical; Signal-anchor for type II membrane protein membrane-spanning segment. Residues 128–783 (DRLPNGKARG…NLHGINTNEF (656 aa)) lie on the Extracellular side of the membrane. Asn139 and Asn213 each carry an N-linked (GlcNAc...) asparagine glycan. The PA domain maps to 241-333 (HNGQLNNIPV…GTGDALTPEW (93 aa)). Asn529 carries N-linked (GlcNAc...) asparagine glycosylation.

The protein localises to the cell membrane. This is an uncharacterized protein from Saccharomyces cerevisiae (strain ATCC 204508 / S288c) (Baker's yeast).